A 501-amino-acid polypeptide reads, in one-letter code: Suppressor of hairless protein homolog (501 aa).

3 DNA-binding regions span residues 58-68 (QKSYGNEKRFF), 166-171 (SKPSKK), and 193-198 (RLRSQT). The IPT/TIG domain occupies 356–446 (PVVESLQLNG…YSTSLTFTYT (91 aa)).

It belongs to the Su(H) family. As to quaternary structure, interacts with activated Notch proteins. Forms a ternary complex with nrarp and the intracellular domain (NICD) of notch1. Interacts with rita1, leading to nuclear export, prevent the interaction between rbpj and NICD product and subsequent down-regulation of the Notch signaling pathway.

The protein resides in the nucleus. Its subcellular location is the cytoplasm. Its function is as follows. Transcriptional regulator that plays a central role in Notch signaling, a signaling pathway involved in cell-cell communication that regulates a broad spectrum of cell-fate determinations. Acts as a transcriptional repressor when it is not associated with Notch proteins. When associated with some NICD product of Notch proteins (Notch intracellular domain), it acts as a transcriptional activator that activates transcription of Notch target genes. Required for the transcriptional activation of ESR1, suggesting that it is required during primary neurogenesis in embryos. Binds to the oxygen responsive element of COX4I2 and activates its transcription under hypoxia conditions (4% oxygen). The polypeptide is Suppressor of hairless protein homolog (rbpj) (Xenopus laevis (African clawed frog)).